Reading from the N-terminus, the 559-residue chain is MDTAELSKVDDGWTVLTFAAAYGLEKVCEALIPKMSEQAINHVDKDGNTALTWAAYTGLEKVCEALIPKMSDQAINHVNSDGNTALSIARNKGFKNMCDLLTTIEATKQNEIQTNLKLTTTKTSHEKLIEAIEARNEAEAQNLIVHMDTAELSKVNNDDWTALTFAAAYGLEKVCELLIPKMTDQVINHVDKDGDTALTWAASSGLEKICEALIPKMTEQTINQLTDNNDTVLTLAANKSLGKICEILIPKMTDQAINQVNKDGNTALIAAASSHLEKICEALIPKMSDQAINHINNYGNTALIAAASSGLEKVCETLIPKMTEQAINQANHQCDTALIFAVRNSLKKVCEVLIPKMSYEAINCWSTNSFWFGFTAFTWVTLNGDKKICELLIPKTSPEVIIDILKLTKEKQFIIEAINSCNKTSPEVIINILKLAKEKQFMIEAINNYNNKLVKELNLILDENNPNNAIKMIRAVKIYKKLFKEYLTVEKTENFKPLQNTIEDFIKNNFFTAAGVCKNLIPKIDNNEIHISCLTTEIIAHIVEYLENEKWGLEVETLG.

10 ANK repeats span residues 11 to 40 (DGWT…EQAI), 46 to 75 (DGNT…DQAI), 81 to 110 (DGNT…TKQN), 158 to 189 (DDWT…VINH), 228 to 257 (NNDT…DQAI), 263 to 292 (DGNT…DQAI), 298 to 327 (YGNT…EQAI), 333 to 364 (QCDT…AINC), 372 to 402 (FGFT…EVII), and 524 to 554 (IDNN…WGLE).

The protein is Putative ankyrin repeat protein RBE_0902 of Rickettsia bellii (strain RML369-C).